The following is a 284-amino-acid chain: D-tagatose-1,6-bisphosphate aldolase subunit GatY (284 aa).

Catalysis depends on D82, which acts as the Proton donor. Residues H83 and H180 each contribute to the Zn(2+) site. C181 provides a ligand contact to dihydroxyacetone phosphate. H208 is a binding site for Zn(2+). Dihydroxyacetone phosphate-binding positions include 209–211 (GAS) and 230–233 (NVAT).

Belongs to the class II fructose-bisphosphate aldolase family. TagBP aldolase GatY subfamily. In terms of assembly, forms a complex with GatZ. It depends on Zn(2+) as a cofactor.

It carries out the reaction D-tagatofuranose 1,6-bisphosphate = D-glyceraldehyde 3-phosphate + dihydroxyacetone phosphate. It participates in carbohydrate metabolism; D-tagatose 6-phosphate degradation; D-glyceraldehyde 3-phosphate and glycerone phosphate from D-tagatose 6-phosphate: step 2/2. Functionally, catalytic subunit of the tagatose-1,6-bisphosphate aldolase GatYZ, which catalyzes the reversible aldol condensation of dihydroxyacetone phosphate (DHAP or glycerone-phosphate) with glyceraldehyde 3-phosphate (G3P) to produce tagatose 1,6-bisphosphate (TBP). Requires GatZ subunit for full activity and stability. Is involved in the catabolism of galactitol. The sequence is that of D-tagatose-1,6-bisphosphate aldolase subunit GatY from Salmonella paratyphi A (strain ATCC 9150 / SARB42).